The chain runs to 433 residues: Dihydrolipoyllysine-residue acetyltransferase component of pyruvate dehydrogenase complex (433 aa).

Residues 2 to 77 form the Lipoyl-binding domain; the sequence is AFEFRLPDIG…VVGDVIVKID (76 aa). At Lys43 the chain carries N6-lipoyllysine. Disordered regions lie at residues 80–134 and 164–204; these read DAEE…PSVR and YLNG…FPET. Basic and acidic residues-rich tracts occupy residues 84–103 and 117–126; these read MQFK…KEQE and EKTEVDESKT. The 38-residue stretch at 128-165 folds into the Peripheral subunit-binding (PSBD) domain; sequence KAMPSVRKYARENGVNIKAVNGSGKNGRITKEDIDAYL. A compositionally biased stretch (low complexity) spans 166–188; the sequence is NGGSSEEGSNTSVASESTSSDVV. Residue His404 is part of the active site.

It belongs to the 2-oxoacid dehydrogenase family. Forms a 24-polypeptide structural core with octahedral symmetry. It depends on (R)-lipoate as a cofactor.

It catalyses the reaction N(6)-[(R)-dihydrolipoyl]-L-lysyl-[protein] + acetyl-CoA = N(6)-[(R)-S(8)-acetyldihydrolipoyl]-L-lysyl-[protein] + CoA. Functionally, the pyruvate dehydrogenase complex catalyzes the overall conversion of pyruvate to acetyl-CoA and CO(2). It contains multiple copies of three enzymatic components: pyruvate dehydrogenase (E1), dihydrolipoamide acetyltransferase (E2) and lipoamide dehydrogenase (E3). This chain is Dihydrolipoyllysine-residue acetyltransferase component of pyruvate dehydrogenase complex (pdhC), found in Staphylococcus epidermidis (strain ATCC 12228 / FDA PCI 1200).